A 266-amino-acid chain; its full sequence is Indole-3-glycerol phosphate synthase (266 aa).

Belongs to the TrpC family.

It carries out the reaction 1-(2-carboxyphenylamino)-1-deoxy-D-ribulose 5-phosphate + H(+) = (1S,2R)-1-C-(indol-3-yl)glycerol 3-phosphate + CO2 + H2O. The protein operates within amino-acid biosynthesis; L-tryptophan biosynthesis; L-tryptophan from chorismate: step 4/5. The polypeptide is Indole-3-glycerol phosphate synthase (Acidovorax sp. (strain JS42)).